The sequence spans 141 residues: 3-hydroxyacyl-[acyl-carrier-protein] dehydratase FabZ (141 aa).

Residue H49 is part of the active site.

Belongs to the thioester dehydratase family. FabZ subfamily.

It localises to the cytoplasm. It carries out the reaction a (3R)-hydroxyacyl-[ACP] = a (2E)-enoyl-[ACP] + H2O. Involved in unsaturated fatty acids biosynthesis. Catalyzes the dehydration of short chain beta-hydroxyacyl-ACPs and long chain saturated and unsaturated beta-hydroxyacyl-ACPs. This chain is 3-hydroxyacyl-[acyl-carrier-protein] dehydratase FabZ, found in Clostridium acetobutylicum (strain ATCC 824 / DSM 792 / JCM 1419 / IAM 19013 / LMG 5710 / NBRC 13948 / NRRL B-527 / VKM B-1787 / 2291 / W).